The sequence spans 492 residues: 3-octaprenyl-4-hydroxybenzoate carboxy-lyase (492 aa).

Residue Asn-175 coordinates Mn(2+). Prenylated FMN is bound by residues 178–180 (IYR), 192–194 (RWL), and 197–198 (RG). Residue Glu-241 participates in Mn(2+) binding. Asp-290 acts as the Proton donor in catalysis.

The protein belongs to the UbiD family. Homohexamer. Prenylated FMN serves as cofactor. It depends on Mn(2+) as a cofactor.

The protein resides in the cell membrane. The catalysed reaction is a 4-hydroxy-3-(all-trans-polyprenyl)benzoate + H(+) = a 2-(all-trans-polyprenyl)phenol + CO2. Its pathway is cofactor biosynthesis; ubiquinone biosynthesis. Catalyzes the decarboxylation of 3-octaprenyl-4-hydroxy benzoate to 2-octaprenylphenol, an intermediate step in ubiquinone biosynthesis. In Salmonella typhimurium (strain LT2 / SGSC1412 / ATCC 700720), this protein is 3-octaprenyl-4-hydroxybenzoate carboxy-lyase.